Here is a 151-residue protein sequence, read N- to C-terminus: 3-dehydroquinate dehydratase (151 aa).

Tyr24 serves as the catalytic Proton acceptor. 3 residues coordinate substrate: Asn76, His82, and Asp89. The active-site Proton donor is His102. Residues 103 to 104 and Arg113 each bind substrate; that span reads VS.

The protein belongs to the type-II 3-dehydroquinase family. As to quaternary structure, homododecamer.

It catalyses the reaction 3-dehydroquinate = 3-dehydroshikimate + H2O. It participates in metabolic intermediate biosynthesis; chorismate biosynthesis; chorismate from D-erythrose 4-phosphate and phosphoenolpyruvate: step 3/7. Catalyzes a trans-dehydration via an enolate intermediate. The chain is 3-dehydroquinate dehydratase from Rhodopseudomonas palustris (strain HaA2).